Reading from the N-terminus, the 146-residue chain is Hemoglobin subunit beta (146 aa).

Positions 2–146 (HWTAEEKQLI…VAHALARKYH (145 aa)) constitute a Globin domain. Heme b-binding residues include His-63 and His-92.

This sequence belongs to the globin family. In terms of assembly, heterotetramer of two alpha chains and two beta chains. As to expression, red blood cells.

In terms of biological role, involved in oxygen transport from the lung to the various peripheral tissues. The protein is Hemoglobin subunit beta (HBB) of Ara ararauna (Blue-and-yellow macaw).